The chain runs to 219 residues: Uracil-DNA glycosylase (219 aa).

The active-site Proton acceptor is the aspartate 61.

This sequence belongs to the uracil-DNA glycosylase (UDG) superfamily. UNG family.

The protein localises to the cytoplasm. It catalyses the reaction Hydrolyzes single-stranded DNA or mismatched double-stranded DNA and polynucleotides, releasing free uracil.. Functionally, excises uracil residues from the DNA which can arise as a result of misincorporation of dUMP residues by DNA polymerase or due to deamination of cytosine. This chain is Uracil-DNA glycosylase, found in Exiguobacterium sibiricum (strain DSM 17290 / CCUG 55495 / CIP 109462 / JCM 13490 / 255-15).